The sequence spans 386 residues: Agamous-like MADS-box protein AGL103 (386 aa).

An MADS-box domain is found at Ser29–Arg76.

As to quaternary structure, interacts with MEE14/CBP1.

The protein resides in the nucleus. Functionally, probable transcription factor that may function in the maintenance of the proper function of the central cell in pollen tube attraction. The polypeptide is Agamous-like MADS-box protein AGL103 (Arabidopsis thaliana (Mouse-ear cress)).